Here is a 205-residue protein sequence, read N- to C-terminus: D-alanine--D-alanine ligase (205 aa).

The ATP-grasp domain occupies 111–205 (KHVLKSLGID…LGRAIGTMEF (95 aa)). An ATP-binding site is contributed by 139–190 (MPYPFVIKPICGGSTIGVHAIFSRSEYLDLSVHADALEGRMLVEEYIPGQEV).

Belongs to the D-alanine--D-alanine ligase family. Mg(2+) is required as a cofactor. Requires Mn(2+) as cofactor.

It is found in the cytoplasm. The catalysed reaction is 2 D-alanine + ATP = D-alanyl-D-alanine + ADP + phosphate + H(+). It functions in the pathway cell wall biogenesis; peptidoglycan biosynthesis. Cell wall formation. This chain is D-alanine--D-alanine ligase (ddl), found in Anaplasma centrale.